A 378-amino-acid chain; its full sequence is Ribosomal RNA large subunit methyltransferase G (378 aa).

It belongs to the methyltransferase superfamily. RlmG family.

It is found in the cytoplasm. The catalysed reaction is guanosine(1835) in 23S rRNA + S-adenosyl-L-methionine = N(2)-methylguanosine(1835) in 23S rRNA + S-adenosyl-L-homocysteine + H(+). In terms of biological role, specifically methylates the guanine in position 1835 (m2G1835) of 23S rRNA. This chain is Ribosomal RNA large subunit methyltransferase G, found in Salmonella paratyphi B (strain ATCC BAA-1250 / SPB7).